The following is a 273-amino-acid chain: Nitrogenase iron protein 4 (273 aa).

8-15 contributes to the ATP binding site; that stretch reads GKGGIGKS. Cysteine 94 contributes to the [4Fe-4S] cluster binding site. An ADP-ribosylarginine; by dinitrogenase reductase ADP-ribosyltransferase modification is found at arginine 97. Cysteine 129 is a binding site for [4Fe-4S] cluster.

Belongs to the NifH/BchL/ChlL family. As to quaternary structure, homodimer. The cofactor is [4Fe-4S] cluster. Post-translationally, the reversible ADP-ribosylation of Arg-97 inactivates the nitrogenase reductase and regulates nitrogenase activity.

The catalysed reaction is N2 + 8 reduced [2Fe-2S]-[ferredoxin] + 16 ATP + 16 H2O = H2 + 8 oxidized [2Fe-2S]-[ferredoxin] + 2 NH4(+) + 16 ADP + 16 phosphate + 6 H(+). Its function is as follows. The key enzymatic reactions in nitrogen fixation are catalyzed by the nitrogenase complex, which has 2 components: the iron protein and the molybdenum-iron protein. The sequence is that of Nitrogenase iron protein 4 (nifH4) from Clostridium pasteurianum.